A 471-amino-acid chain; its full sequence is COP9 signalosome complex subunit 1 (471 aa).

In terms of domain architecture, PCI spans 249 to 411 (CFLLASFDHC…KILYARDVDQ (163 aa)). The tract at residues 445 to 471 (HVKSPPREGSQGELTPANSQSRMSTNM) is disordered. Ser-448 and Ser-454 each carry phosphoserine. Over residues 456–471 (GELTPANSQSRMSTNM) the composition is skewed to polar residues. Thr-459 bears the Phosphothreonine mark. At Ser-463 the chain carries Phosphoserine.

This sequence belongs to the CSN1 family. Component of the CSN complex, composed of COPS1/GPS1, COPS2, COPS3, COPS4, COPS5, COPS6, COPS7 (COPS7A or COPS7B), COPS8 and COPS9. In the complex, it probably interacts directly with COPS2, COPS3, COPS4 and COPS5. Interacts directly with inositol kinase ITPK1. Interacts with CAPN8. Interacts with USP48. Interacts with ASB4; this interaction negatively regulates GPS1. Expressed in the base region of the oxyntic and pyloric mucosae.

It is found in the cytoplasm. The protein localises to the nucleus. Essential component of the COP9 signalosome complex (CSN), a complex involved in various cellular and developmental processes. The CSN complex is an essential regulator of the ubiquitin (Ubl) conjugation pathway by mediating the deneddylation of the cullin subunits of SCF-type E3 ligase complexes, leading to decrease the Ubl ligase activity of SCF-type complexes such as SCF, CSA or DDB2. The complex is also involved in phosphorylation of p53/TP53, c-jun/JUN, IkappaBalpha/NFKBIA, ITPK1 and IRF8/ICSBP, possibly via its association with CK2 and PKD kinases. CSN-dependent phosphorylation of TP53 and JUN promotes and protects degradation by the Ubl system, respectively. Suppresses G-protein- and mitogen-activated protein kinase-mediated signal transduction. The chain is COP9 signalosome complex subunit 1 (Gps1) from Mus musculus (Mouse).